Here is an 89-residue protein sequence, read N- to C-terminus: Small ribosomal subunit protein uS15 (89 aa).

Basic and acidic residues predominate over residues 1 to 10; it reads MSITAERKAE. The tract at residues 1–24 is disordered; it reads MSITAERKAEVIQGNANKAGDTGS.

This sequence belongs to the universal ribosomal protein uS15 family. Part of the 30S ribosomal subunit. Forms a bridge to the 50S subunit in the 70S ribosome, contacting the 23S rRNA.

One of the primary rRNA binding proteins, it binds directly to 16S rRNA where it helps nucleate assembly of the platform of the 30S subunit by binding and bridging several RNA helices of the 16S rRNA. Its function is as follows. Forms an intersubunit bridge (bridge B4) with the 23S rRNA of the 50S subunit in the ribosome. This Rhodopseudomonas palustris (strain BisB5) protein is Small ribosomal subunit protein uS15.